Consider the following 666-residue polypeptide: ATP-dependent zinc metalloprotease FtsH (666 aa).

Residues 1 to 6 (MKSETG) lie on the Cytoplasmic side of the membrane. The chain crosses the membrane as a helical span at residues 7–27 (YMGFVVVLVFMVLLALQLATL). The Periplasmic segment spans residues 28-116 (SAPATQIAYS…TRYRGADDDT (89 aa)). Residues 117 to 137 (WIGTLASWIVPIAVFALVWNL) traverse the membrane as a helical segment. The Cytoplasmic portion of the chain corresponds to 138-666 (MLRRPRGGLQ…ADNADHSVPQ (529 aa)). Position 210–217 (210–217 (GAPGTGKT)) interacts with ATP. Zn(2+) is bound at residue His432. Glu433 is a catalytic residue. His436 and Asp509 together coordinate Zn(2+). The interval 612–666 (NDEPTPEPGARDPGGDAAKRSGIGAAPAKPPAEVGSAELRDPARKADNADHSVPQ) is disordered. 2 stretches are compositionally biased toward basic and acidic residues: residues 620 to 630 (GARDPGGDAAK) and 649 to 666 (ELRD…SVPQ).

In the central section; belongs to the AAA ATPase family. The protein in the C-terminal section; belongs to the peptidase M41 family. Homohexamer. Zn(2+) is required as a cofactor.

Its subcellular location is the cell inner membrane. Functionally, acts as a processive, ATP-dependent zinc metallopeptidase for both cytoplasmic and membrane proteins. Plays a role in the quality control of integral membrane proteins. The sequence is that of ATP-dependent zinc metalloprotease FtsH from Burkholderia pseudomallei (strain 1710b).